Here is a 480-residue protein sequence, read N- to C-terminus: RAC-alpha serine/threonine-protein kinase (480 aa).

The region spanning 5-108 (AIVKEGWLHK…WATAIQTVAD (104 aa)) is the PH domain. K14 and K20 each carry N6-acetyllysine. 14–19 (KRGEYI) lines the 1D-myo-inositol 1,3,4,5-tetrakisphosphate pocket. Residues 23–25 (RPR) and N53 each bind 1D-myo-inositol 1,3,4,5-tetrakisphosphate. A disulfide bond links C60 and C77. R86 provides a ligand contact to 1D-myo-inositol 1,3,4,5-tetrakisphosphate. The segment at 114-137 (EEETMDFRSGSPSDNSGAEEMEVS) is disordered. S124 is modified (phosphoserine). Phosphoserine; alternate is present on residues S126 and S129. Residues S126 and S129 are each glycosylated (O-linked (GlcNAc) serine; alternate). Positions 150-408 (FEYLKLLGKG…AKEIMQHRFF (259 aa)) constitute a Protein kinase domain. 156–164 (LGKGTFGKV) provides a ligand contact to ATP. Y176 carries the phosphotyrosine; by TNK2 modification. Residue K179 participates in ATP binding. D274 serves as the catalytic Proton acceptor. Residue K284 forms a Glycyl lysine isopeptide (Lys-Gly) (interchain with G-Cter in ubiquitin) linkage. C296 and C310 are joined by a disulfide. T305 carries an O-linked (GlcNAc) threonine glycan. T308 carries the post-translational modification Phosphothreonine; by IKKE, PDPK1 and TBK1. A glycan (O-linked (GlcNAc) threonine) is linked at T312. The 72-residue stretch at 409-480 (ANIVWQDVYE…QFSYSASGTA (72 aa)) folds into the AGC-kinase C-terminal domain. Phosphothreonine is present on T448. T450 is modified (phosphothreonine; by MTOR). The segment at 450–480 (TPPDQDDSMECVDSERRPHFPQFSYSASGTA) is disordered. A glycan (O-linked (GlcNAc) serine; alternate) is linked at S473. The residue at position 473 (S473) is a Phosphoserine; by IKKE, MTOR, PRKDC and TBK1; alternate. The residue at position 474 (Y474) is a Phosphotyrosine. The residue at position 477 (S477) is a Phosphoserine; by CDK2 and MTOR. T479 bears the Phosphothreonine; by CDK2 and MTOR mark.

Belongs to the protein kinase superfamily. AGC Ser/Thr protein kinase family. RAC subfamily. In terms of assembly, interacts with and phosphorylated by PDPK1. Interacts with AGAP2 (isoform 2/PIKE-A); the interaction occurs in the presence of guanine nucleotides. Interacts with AKTIP. Interacts (via PH domain) with MTCP1, TCL1A and TCL1B. Interacts with CDKN1B; the interaction phosphorylates CDKN1B promoting 14-3-3 binding and cell-cycle progression. Interacts with MAP3K5 and TRAF6. Interacts with BAD, PPP2R5B, STK3 and STK4. Interacts (via PH domain) with SIRT1. Interacts with SRPK2 in a phosphorylation-dependent manner. Interacts with TRIM13; the interaction ubiquitinates AKT1 leading to its proteasomal degradation. Interacts with RAF1. Interacts (via the C-terminus) with CCDC88A (via its C-terminus) and THEM4 (via its C-terminus). Interacts with GRB10; the interaction leads to GRB10 phosphorylation thus promoting YWHAE-binding. Interacts with KCTD20. Interacts with BTBD10. Interacts with PA2G4. Interacts with KIF14; the interaction is detected in the plasma membrane upon INS stimulation and promotes AKT1 phosphorylation. Interacts with FAM83B; activates the PI3K/AKT signaling cascade. Interacts with WDFY2 (via WD repeats 1-3). Forms a complex with WDFY2 and FOXO1. Interacts with FAM168A. Interacts with SYAP1 (via phosphorylated form and BSD domain); this interaction is enhanced in a mTORC2-mediated manner in response to epidermal growth factor (EGF) stimulation and activates AKT1. Interacts with PKHM3. Interacts with FKBP5/FKBP51; promoting interaction between Akt/AKT1 and PHLPP1, thereby enhancing dephosphorylation and subsequent activation of Akt/AKT1. Interacts with TMEM175; leading to formation of the lysoK(GF) complex. In terms of processing, O-GlcNAcylation at Thr-305 and Thr-312 inhibits activating phosphorylation at Thr-308 via disrupting the interaction between AKT1 and PDPK1. O-GlcNAcylation at Ser-473 also probably interferes with phosphorylation at this site. Phosphorylation on Thr-308, Ser-473 and Tyr-474 is required for full activity. Phosphorylation of the activation loop at Thr-308 by PDPK1/PDK1 is a prerequisite for full activation. Phosphorylation by mTORC2 in response to growth factors plays a key role in AKT1 activation: mTORC2 phosphorylates different sites depending on the context, such as Thr-450, Ser-473, Ser-477 or Thr-479, thereby facilitating subsequent phosphorylation of the activation loop by PDPK1/PDK1. Phosphorylation at Ser-473 by mTORC2 promotes ubiquitination and degradation by the proteasome. Also phosphorylated at Ser-477 and Thr-479 by CDK2, facilitating subsequent phosphorylation of the activation loop by PDPK1/PDK1. Activated TNK2 phosphorylates it on Tyr-176 resulting in its binding to the anionic plasma membrane phospholipid PA. This phosphorylated form localizes to the cell membrane, where it is targeted by PDPK1 and PDPK2 for further phosphorylations on Thr-308 and Ser-473 leading to its activation. Phosphorylated at Thr-308 and Ser-473 by IKBKE and TBK1. Ser-473 phosphorylation is enhanced by interaction with AGAP2 isoform 2 (PIKE-A). Ser-473 phosphorylation is enhanced by signaling through activated FLT3. Ser-473 is dephosphorylated by PHLPP. Dephosphorylated at Thr-308 and Ser-473 by PP2A phosphatase. The phosphorylated form of PPP2R5B is required for bridging AKT1 with PP2A phosphatase. Ser-473 is dephosphorylated by CPPED1, leading to termination of signaling. AIM2 acts as an inhibitor of AKT1 by inhibiting phosphorylation Ser-473: AIM2 acts both by inhibiting the activity of PRKDC/DNA-PK kinase and promoting dephosphorylation by PP2A phosphatase. Post-translationally, ubiquitinated; undergoes both 'Lys-48'- and 'Lys-63'-linked polyubiquitination. TRAF6-induced 'Lys-63'-linked AKT1 ubiquitination is critical for phosphorylation and activation. When ubiquitinated, it translocates to the plasma membrane, where it becomes phosphorylated. When fully phosphorylated and translocated into the nucleus, undergoes 'Lys-48'-polyubiquitination catalyzed by TTC3, leading to its degradation by the proteasome. Also ubiquitinated by TRIM13 leading to its proteasomal degradation. Ubiquitinated via 'Lys-48'-linked polyubiquitination by ZNRF1, leading to its degradation by the proteasome. Phosphorylated, undergoes 'Lys-48'-linked polyubiquitination preferentially at Lys-284 catalyzed by MUL1, leading to its proteasomal degradation. In terms of processing, acetylated on Lys-14 and Lys-20 by the histone acetyltransferases EP300 and KAT2B. Acetylation results in reduced phosphorylation and inhibition of activity. Deacetylated at Lys-14 and Lys-20 by SIRT1. SIRT1-mediated deacetylation relieves the inhibition. Cleavage by caspase-3/CASP3. Cleaved at the caspase-3 consensus site Asp-462 during apoptosis, resulting in down-regulation of the AKT signaling pathway and decreased cell survival. In terms of tissue distribution, widely expressed. Low levels found in liver with slightly higher levels present in thymus and testis.

Its subcellular location is the cytoplasm. The protein localises to the nucleus. The protein resides in the cell membrane. It localises to the mitochondrion intermembrane space. The catalysed reaction is L-seryl-[protein] + ATP = O-phospho-L-seryl-[protein] + ADP + H(+). The enzyme catalyses L-threonyl-[protein] + ATP = O-phospho-L-threonyl-[protein] + ADP + H(+). With respect to regulation, three specific sites, one in the kinase domain (Thr-308) and the two other ones in the C-terminal regulatory region (Ser-473 and Tyr-474), need to be phosphorylated for its full activation. Functionally, AKT1 is one of 3 closely related serine/threonine-protein kinases (AKT1, AKT2 and AKT3) called the AKT kinase, and which regulate many processes including metabolism, proliferation, cell survival, growth and angiogenesis. This is mediated through serine and/or threonine phosphorylation of a range of downstream substrates. Over 100 substrate candidates have been reported so far, but for most of them, no isoform specificity has been reported. AKT is responsible of the regulation of glucose uptake by mediating insulin-induced translocation of the SLC2A4/GLUT4 glucose transporter to the cell surface. Phosphorylation of PTPN1 at 'Ser-50' negatively modulates its phosphatase activity preventing dephosphorylation of the insulin receptor and the attenuation of insulin signaling. Phosphorylation of TBC1D4 triggers the binding of this effector to inhibitory 14-3-3 proteins, which is required for insulin-stimulated glucose transport. AKT also regulates the storage of glucose in the form of glycogen by phosphorylating GSK3A at 'Ser-21' and GSK3B at 'Ser-9', resulting in inhibition of its kinase activity. Phosphorylation of GSK3 isoforms by AKT is also thought to be one mechanism by which cell proliferation is driven. AKT also regulates cell survival via the phosphorylation of MAP3K5 (apoptosis signal-related kinase). Phosphorylation of 'Ser-83' decreases MAP3K5 kinase activity stimulated by oxidative stress and thereby prevents apoptosis. AKT mediates insulin-stimulated protein synthesis by phosphorylating TSC2 at 'Ser-939' and 'Thr-1462', thereby activating the mTORC1 signaling pathway, and leading to both phosphorylation of 4E-BP1 and in activation of RPS6KB1. Also regulates the mTORC1 signaling pathway by catalyzing phosphorylation of CASTOR1 and DEPDC5. AKT plays a role as key modulator of the AKT-mTOR signaling pathway controlling the tempo of the process of newborn neurons integration during adult neurogenesis, including correct neuron positioning, dendritic development and synapse formation. Part of a positive feedback loop of mTORC2 signaling by mediating phosphorylation of MAPKAP1/SIN1, promoting mTORC2 activation. AKT is involved in the phosphorylation of members of the FOXO factors (Forkhead family of transcription factors), leading to binding of 14-3-3 proteins and cytoplasmic localization. In particular, FOXO1 is phosphorylated at 'Thr-24', 'Ser-256' and 'Ser-319'. FOXO3 and FOXO4 are phosphorylated on equivalent sites. AKT has an important role in the regulation of NF-kappa-B-dependent gene transcription and positively regulates the activity of CREB1 (cyclic AMP (cAMP)-response element binding protein). The phosphorylation of CREB1 induces the binding of accessory proteins that are necessary for the transcription of pro-survival genes such as BCL2 and MCL1. AKT phosphorylates 'Ser-454' on ATP citrate lyase (ACLY), thereby potentially regulating ACLY activity and fatty acid synthesis. Activates the 3B isoform of cyclic nucleotide phosphodiesterase (PDE3B) via phosphorylation of 'Ser-273', resulting in reduced cyclic AMP levels and inhibition of lipolysis. Phosphorylates PIKFYVE on 'Ser-318', which results in increased PI(3)P-5 activity. The Rho GTPase-activating protein DLC1 is another substrate and its phosphorylation is implicated in the regulation cell proliferation and cell growth. Signals downstream of phosphatidylinositol 3-kinase (PI(3)K) to mediate the effects of various growth factors such as platelet-derived growth factor (PDGF), epidermal growth factor (EGF), insulin and insulin-like growth factor 1 (IGF1). AKT mediates the antiapoptotic effects of IGF1. Essential for the SPATA13-mediated regulation of cell migration and adhesion assembly and disassembly. May be involved in the regulation of the placental development. Phosphorylates STK4/MST1 at 'Thr-120' and 'Thr-387' leading to inhibition of its: kinase activity, nuclear translocation, autophosphorylation and ability to phosphorylate FOXO3. Phosphorylates STK3/MST2 at 'Thr-117' and 'Thr-384' leading to inhibition of its: cleavage, kinase activity, autophosphorylation at Thr-180, binding to RASSF1 and nuclear translocation. Phosphorylates SRPK2 and enhances its kinase activity towards SRSF2 and ACIN1 and promotes its nuclear translocation. Phosphorylates RAF1 at 'Ser-259' and negatively regulates its activity. Phosphorylation of BAD stimulates its pro-apoptotic activity. Phosphorylates KAT6A at 'Thr-369' and this phosphorylation inhibits the interaction of KAT6A with PML and negatively regulates its acetylation activity towards p53/TP53. Phosphorylates palladin (PALLD), modulating cytoskeletal organization and cell motility. Phosphorylates prohibitin (PHB), playing an important role in cell metabolism and proliferation. Phosphorylates CDKN1A, for which phosphorylation at 'Thr-145' induces its release from CDK2 and cytoplasmic relocalization. These recent findings indicate that the AKT1 isoform has a more specific role in cell motility and proliferation. Phosphorylates CLK2 thereby controlling cell survival to ionizing radiation. Phosphorylates PCK1 at 'Ser-90', reducing the binding affinity of PCK1 to oxaloacetate and changing PCK1 into an atypical protein kinase activity using GTP as donor. Also acts as an activator of TMEM175 potassium channel activity in response to growth factors: forms the lysoK(GF) complex together with TMEM175 and acts by promoting TMEM175 channel activation, independently of its protein kinase activity. Acts as a negative regulator of the cGAS-STING pathway by mediating phosphorylation of CGAS during mitosis, leading to its inhibition. Acts as a regulator of mitochondrial calcium uptake by mediating phosphorylation of MICU1 in the mitochondrial intermembrane space, impairing MICU1 maturation. Acts as an inhibitor of tRNA methylation by mediating phosphorylation of the N-terminus of METTL1, thereby inhibiting METTL1 methyltransferase activity. In response to LPAR1 receptor pathway activation, phosphorylates Rabin8/RAB3IP which alters its activity and phosphorylates WDR44 which induces WDR44 binding to Rab11, thereby switching Rab11 vesicular function from preciliary trafficking to endocytic recycling. This chain is RAC-alpha serine/threonine-protein kinase (Akt1), found in Mus musculus (Mouse).